The following is a 468-amino-acid chain: RUS family member 1 (468 aa).

N-acetylalanine is present on Ala2. Position 49 is a phosphothreonine (Thr49). The chain crosses the membrane as a helical span at residues 247 to 267 (LLMLPLVSGCPGFSLGCFFFL).

This sequence belongs to the RUS1 family.

The protein localises to the membrane. The polypeptide is RUS family member 1 (Rusf1) (Pongo abelii (Sumatran orangutan)).